Consider the following 264-residue polypeptide: Thymidylate synthase (264 aa).

Residue R21 participates in dUMP binding. Residue H51 coordinates (6R)-5,10-methylene-5,6,7,8-tetrahydrofolate. A dUMP-binding site is contributed by 126 to 127 (RR). The Nucleophile role is filled by C146. DUMP contacts are provided by residues 166 to 169 (RSAD), N177, and 207 to 209 (HIY). A (6R)-5,10-methylene-5,6,7,8-tetrahydrofolate-binding site is contributed by D169. Residue A263 coordinates (6R)-5,10-methylene-5,6,7,8-tetrahydrofolate.

This sequence belongs to the thymidylate synthase family. Bacterial-type ThyA subfamily. In terms of assembly, homodimer.

The protein resides in the cytoplasm. It catalyses the reaction dUMP + (6R)-5,10-methylene-5,6,7,8-tetrahydrofolate = 7,8-dihydrofolate + dTMP. It functions in the pathway pyrimidine metabolism; dTTP biosynthesis. Its function is as follows. Catalyzes the reductive methylation of 2'-deoxyuridine-5'-monophosphate (dUMP) to 2'-deoxythymidine-5'-monophosphate (dTMP) while utilizing 5,10-methylenetetrahydrofolate (mTHF) as the methyl donor and reductant in the reaction, yielding dihydrofolate (DHF) as a by-product. This enzymatic reaction provides an intracellular de novo source of dTMP, an essential precursor for DNA biosynthesis. This Parabacteroides distasonis (strain ATCC 8503 / DSM 20701 / CIP 104284 / JCM 5825 / NCTC 11152) protein is Thymidylate synthase.